Consider the following 326-residue polypeptide: Serine protease 38 (326 aa).

The first 32 residues, 1-32 (MAAPASVMGPLGPSALGLLLLLLVVAPPRVAA), serve as a signal peptide directing secretion. The propeptide at 33–59 (LVHRQPENQGISLTGSVACGRPSMEGK) is activation peptide. The 234-residue stretch at 60–293 (ILGGVPAPER…FSKWICDNIE (234 aa)) folds into the Peptidase S1 domain. Residues C85 and C101 are joined by a disulfide bond. The active-site Charge relay system is the H100. N-linked (GlcNAc...) asparagine glycosylation occurs at N125. D150 (charge relay system) is an active-site residue. Cystine bridges form between C183/C251, C214/C230, and C241/C269. S245 serves as the catalytic Charge relay system.

This sequence belongs to the peptidase S1 family.

It localises to the secreted. The sequence is that of Serine protease 38 (PRSS38) from Homo sapiens (Human).